Consider the following 259-residue polypeptide: Thiazole synthase (259 aa).

Residue lysine 99 is the Schiff-base intermediate with DXP of the active site. 1-deoxy-D-xylulose 5-phosphate-binding positions include glycine 161, 187 to 188 (AG), and 209 to 210 (NT).

The protein belongs to the ThiG family. In terms of assembly, homotetramer. Forms heterodimers with either ThiH or ThiS.

The protein localises to the cytoplasm. It carries out the reaction [ThiS sulfur-carrier protein]-C-terminal-Gly-aminoethanethioate + 2-iminoacetate + 1-deoxy-D-xylulose 5-phosphate = [ThiS sulfur-carrier protein]-C-terminal Gly-Gly + 2-[(2R,5Z)-2-carboxy-4-methylthiazol-5(2H)-ylidene]ethyl phosphate + 2 H2O + H(+). It participates in cofactor biosynthesis; thiamine diphosphate biosynthesis. Its function is as follows. Catalyzes the rearrangement of 1-deoxy-D-xylulose 5-phosphate (DXP) to produce the thiazole phosphate moiety of thiamine. Sulfur is provided by the thiocarboxylate moiety of the carrier protein ThiS. In vitro, sulfur can be provided by H(2)S. In Sulfurimonas denitrificans (strain ATCC 33889 / DSM 1251) (Thiomicrospira denitrificans (strain ATCC 33889 / DSM 1251)), this protein is Thiazole synthase.